The sequence spans 611 residues: MPPVDPHSYTDGDHPVTAKAALAFYLDFAASTIHASALLTLSAPHSGDLLLDTRALAVHSASTASGPPSPIPFSLADAADPVLGSALTLTLPPDTTSFLLTFSTSPSASALQWLSPPQTASSLPFVFSQCQSIHARSVFPCHDTPAARITFDLLLNVPTQLSAVAAARHVSRRDPLPSDHRGACDDALWCAPGRIVEEFQMEQSVPPYLFAFAAGGIGFRDLGPRTRVYAEGGDKVLDEAAREFAGVEEMVKVGESLFGPYEWERFDLLVLPPSFPYGGMENPRMVFLTPTVIKGDAAGAQVVAHELAHSWTGNLITNKTNEDFWLNEGFTTYAERRIVEVVQGEERAALNMGIGWRGLNRMMERFKDNMEYTKLKPKMAGIDPDDVYSEVPYEKGFQFLWRIERQIGRPAFDEFLKNYISTFKFKSIDTETFLEFLKTNVPGIENQIDLQLWIEGTGIPPDAMEPESAIYKKICSLAAEFKSGKLPSEDEVADWSGQEWELYLENLPTDVEASQVTALDERYKLSESCDYEVKVAFLQLAIPTGCRCYFNEVEKCLKQVGRMKYLRPLYSSLARCSGEEKMLAHRIFSEAHEFYHPIARSVAESILSKHG.

Substrate contacts are provided by residues 129-131 (QCQ) and 278-282 (GGMEN). Residue His305 participates in Zn(2+) binding. Glu306 (proton acceptor) is an active-site residue. Zn(2+) contacts are provided by His309 and Glu328. Tyr393 functions as the Proton donor in the catalytic mechanism. A substrate-binding site is contributed by 562-564 (RMK).

Belongs to the peptidase M1 family. Requires Zn(2+) as cofactor.

It localises to the cytoplasm. It catalyses the reaction an epoxide + H2O = an ethanediol. In terms of biological role, aminopeptidase that preferentially cleaves di- and tripeptides. Also has low epoxide hydrolase activity (in vitro). Can hydrolyze the epoxide leukotriene LTA(4) but it forms preferentially 5,6-dihydroxy-7,9,11,14-eicosatetraenoic acid rather than the cytokine leukotriene B(4) as the product compared to the homologous mammalian enzyme (in vitro). This chain is Leucine aminopeptidase (LKHA4), found in Oryza sativa subsp. japonica (Rice).